We begin with the raw amino-acid sequence, 740 residues long: Catalase-peroxidase (740 aa).

Positions 107-229 (WHAAGTYRIH…LAAVQMGLIY (123 aa)) form a cross-link, tryptophyl-tyrosyl-methioninium (Trp-Tyr) (with M-255). The Proton acceptor role is filled by histidine 108. A cross-link (tryptophyl-tyrosyl-methioninium (Tyr-Met) (with W-107)) is located at residues 229-255 (YVNPEGPNGNPDPMAAAVDIRETFRRM). Histidine 270 lines the heme b pocket. Tryptophan 321 serves as the catalytic Tryptophan radical intermediate.

This sequence belongs to the peroxidase family. Peroxidase/catalase subfamily. In terms of assembly, homodimer. Heme b is required as a cofactor. In terms of processing, formation of the three residue Trp-Tyr-Met cross-link is important for the catalase, but not the peroxidase activity of the enzyme.

The enzyme catalyses H2O2 + AH2 = A + 2 H2O. The catalysed reaction is 2 H2O2 = O2 + 2 H2O. Its function is as follows. Bifunctional enzyme with both catalase and broad-spectrum peroxidase activity, oxidizing various electron donors including NADP(H). Protects M.tuberculosis against toxic reactive oxygen species (ROS) including hydrogen peroxide as well as organic peroxides and thus contributes to its survival within host macrophages by countering the phagocyte oxidative burst. Also displays efficient peroxynitritase activity, which may help the bacterium to persist in macrophages. Functionally, catalyzes the oxidative activation of the antitubercular pro-drug isoniazid (INH) to generate an isonicotinoyl radical that then reacts nonenzymatically with NAD to form an isonicotinoyl-NAD adduct which inhibits InhA. This is Catalase-peroxidase from Mycobacterium tuberculosis (strain CDC 1551 / Oshkosh).